The following is a 252-amino-acid chain: Cytochrome c oxidase subunit 2 (252 aa).

Residues 1–39 are Mitochondrial intermembrane-facing; sequence MFLIMLKGHILMDAPTPWGIFFQDSASPQMEGIMELHNN. The chain crosses the membrane as a helical span at residues 40–59; the sequence is IMFYLAIILFTVTWMMITII. Residues 60–81 lie on the Mitochondrial matrix side of the membrane; it reads RNFVAKKSPIAHKYMNHGTLIE. A helical transmembrane segment spans residues 82–105; it reads LIWTITPAFILILIAFPSFKLLYL. Topologically, residues 106 to 252 are mitochondrial intermembrane; that stretch reads MDEVMDPSLV…LLWLRDQMEG (147 aa). Residues H184, C219, E221, C223, H227, and M230 each coordinate Cu cation. A Mg(2+)-binding site is contributed by E221.

The protein belongs to the cytochrome c oxidase subunit 2 family. As to quaternary structure, component of the cytochrome c oxidase (complex IV, CIV), a multisubunit enzyme composed of a catalytic core of 3 subunits and several supernumerary subunits. The complex exists as a monomer or a dimer and forms supercomplexes (SCs) in the inner mitochondrial membrane with ubiquinol-cytochrome c oxidoreductase (cytochrome b-c1 complex, complex III, CIII). Cu cation serves as cofactor.

It is found in the mitochondrion inner membrane. The enzyme catalyses 4 Fe(II)-[cytochrome c] + O2 + 8 H(+)(in) = 4 Fe(III)-[cytochrome c] + 2 H2O + 4 H(+)(out). Functionally, component of the cytochrome c oxidase, the last enzyme in the mitochondrial electron transport chain which drives oxidative phosphorylation. The respiratory chain contains 3 multisubunit complexes succinate dehydrogenase (complex II, CII), ubiquinol-cytochrome c oxidoreductase (cytochrome b-c1 complex, complex III, CIII) and cytochrome c oxidase (complex IV, CIV), that cooperate to transfer electrons derived from NADH and succinate to molecular oxygen, creating an electrochemical gradient over the inner membrane that drives transmembrane transport and the ATP synthase. Cytochrome c oxidase is the component of the respiratory chain that catalyzes the reduction of oxygen to water. Electrons originating from reduced cytochrome c in the intermembrane space (IMS) are transferred via the dinuclear copper A center (CU(A)) of subunit 2 and heme A of subunit 1 to the active site in subunit 1, a binuclear center (BNC) formed by heme A3 and copper B (CU(B)). The BNC reduces molecular oxygen to 2 water molecules using 4 electrons from cytochrome c in the IMS and 4 protons from the mitochondrial matrix. This is Cytochrome c oxidase subunit 2 (cox2) from Emericella nidulans (Aspergillus nidulans).